The chain runs to 490 residues: Homoserine O-acetyltransferase (490 aa).

The AB hydrolase-1 domain maps to 47–353; the sequence is NAILVCHALT…SQFGHDAFLI (307 aa). Ser152 functions as the Nucleophile in the catalytic mechanism. Substrate is bound at residue Arg221. Active-site residues include Asp315 and His348. Asp349 is a substrate binding site. 2 CBS domains span residues 375–432 and 436–490; these read MNTQ…YTSL and MSSQ…GRGP.

The protein belongs to the AB hydrolase superfamily. MetX family. In terms of assembly, homodimer.

The protein resides in the cytoplasm. It catalyses the reaction L-homoserine + acetyl-CoA = O-acetyl-L-homoserine + CoA. It participates in amino-acid biosynthesis; L-methionine biosynthesis via de novo pathway; O-acetyl-L-homoserine from L-homoserine: step 1/1. Its function is as follows. Transfers an acetyl group from acetyl-CoA to L-homoserine, forming acetyl-L-homoserine. The polypeptide is Homoserine O-acetyltransferase (Methanosphaerula palustris (strain ATCC BAA-1556 / DSM 19958 / E1-9c)).